Reading from the N-terminus, the 165-residue chain is Endoribonuclease YbeY (165 aa).

3 residues coordinate Zn(2+): H130, H134, and H140.

This sequence belongs to the endoribonuclease YbeY family. Zn(2+) is required as a cofactor.

The protein localises to the cytoplasm. Functionally, single strand-specific metallo-endoribonuclease involved in late-stage 70S ribosome quality control and in maturation of the 3' terminus of the 16S rRNA. The protein is Endoribonuclease YbeY of Streptococcus pyogenes serotype M28 (strain MGAS6180).